The following is a 423-amino-acid chain: 5-hydroxytryptamine receptor 1A (423 aa).

Residues 1–38 (MEGLSPRQGNNTTSSEGPFGTLGNATGISDVTFSYQVI) lie on the Extracellular side of the membrane. N-linked (GlcNAc...) asparagine glycosylation is found at Asn10, Asn11, and Asn24. Residues 39–59 (TSLLLGTLIFCAVLGNACVVA) form a helical membrane-spanning segment. The Cytoplasmic segment spans residues 60–73 (AIALERSLQNVANY). Residues 74-98 (LIGSLAVTDLMVSVLVLPMAALYQV) traverse the membrane as a helical segment. Topologically, residues 99-107 (LNKWTLGQV) are extracellular. A helical membrane pass occupies residues 108-132 (TCDLFIALDVLCCTSSILHLCAIAL). Cysteines 109 and 187 form a disulfide. Serotonin-binding residues include Asp116 and Cys120. A DRY motif; important for ligand-induced conformation changes motif is present at residues 133–135 (DRY). Residues 133–152 (DRYWAITDPIDYVNKRTPRR) lie on the Cytoplasmic side of the membrane. The chain crosses the membrane as a helical span at residues 153-174 (AAALISLTWLIGFLISIPPMLG). Residues 175-193 (WRTPEDRSDPDACTISKDH) lie on the Extracellular side of the membrane. A helical transmembrane segment spans residues 194–216 (GYTIYSTFGAFYIPLLLMLVLYG). At 217–346 (RIFRAARFRI…LARERKTVKT (130 aa)) the chain is on the cytoplasmic side. Residues 235-277 (RKGADARSGVSPAPQPRKSVNGEPGGREWRQGPGSQAGGPLCT) are disordered. 1D-myo-inositol 4-phosphate contacts are provided by Lys345, Thr346, and Gly352. The chain crosses the membrane as a helical span at residues 347–370 (LGIIMGTFILCWLPFFIVALVLPF). At 371-378 (CESSCHMP) the chain is on the extracellular side. Residues 379 to 403 (TLLGAIINWLGYSNSLLNPVIYAYF) form a helical membrane-spanning segment. The NPxxY motif; important for ligand-induced conformation changes and signaling motif lies at 396 to 400 (NPVIY). Positions 403, 404, and 405 each coordinate 1D-myo-inositol 4-phosphate. At 404–423 (NKDFQNAFKKIVRCKFCRRR) the chain is on the cytoplasmic side.

The protein belongs to the G-protein coupled receptor 1 family. 5-hydroxytryptamine receptor subfamily. HTR1A sub-subfamily. As to quaternary structure, heterodimer; heterodimerizes with GPER1. Interacts with YIF1B. Interacts with GPR39 and GALR1.

The protein localises to the cell membrane. It localises to the cell projection. The protein resides in the dendrite. Its activity is regulated as follows. G-protein coupled receptor activity is regulated by lipids: phosphatidylinositol 4-phosphate increases HTR1A-mediated activity. In terms of biological role, G-protein coupled receptor for 5-hydroxytryptamine (serotonin). Also functions as a receptor for various drugs and psychoactive substances. Ligand binding causes a conformation change that triggers signaling via guanine nucleotide-binding proteins (G proteins) and modulates the activity of downstream effectors, such as adenylate cyclase. HTR1A is coupled to G(i)/G(o) G alpha proteins and mediates inhibitory neurotransmission: signaling inhibits adenylate cyclase activity and activates a phosphatidylinositol-calcium second messenger system that regulates the release of Ca(2+) ions from intracellular stores. Beta-arrestin family members regulate signaling by mediating both receptor desensitization and resensitization processes. The sequence is that of 5-hydroxytryptamine receptor 1A (HTR1A) from Canis lupus familiaris (Dog).